The sequence spans 496 residues: Fibronectin type III and SPRY domain-containing protein 1 (496 aa).

Residues 4–99 (QKEALRKIIT…ALESSEELLE (96 aa)) are a coiled coil. A COS domain is found at 105–162 (LLATDSKDFPQAAKQIKDGVTMAPAFRLSLKAKVSDNMSHLMVDFAQERRMLQALTFL). The Fibronectin type-III domain occupies 164–268 (VPSAPVIDLT…EPVTLETPAF (105 aa)). One can recognise a B30.2/SPRY domain in the interval 268–477 (FMFRLDASTS…VTTGLQVPSS (210 aa)). The interval 301–336 (KAREKDGKGRTASPVNSPARGTPSPKRMPSGRGGRD) is disordered. Omega-N-methylarginine occurs at positions 310 and 320.

In terms of assembly, oligomerization is required for binding to microtubules.

It localises to the cytoplasm. Its subcellular location is the cytoskeleton. The protein localises to the microtubule organizing center. It is found in the centrosome. The protein resides in the nucleus. It localises to the cleavage furrow. Its function is as follows. May be involved in microtubule organization and stabilization. In Bos taurus (Bovine), this protein is Fibronectin type III and SPRY domain-containing protein 1 (FSD1).